The following is a 289-amino-acid chain: Homeobox protein engrailed-2 (289 aa).

2 stretches are compositionally biased toward basic and acidic residues: residues 1–12 (MEEGGRSPREEA) and 60–83 (EFGR…ESRR). 2 disordered regions span residues 1 to 166 (MEEG…GNQP) and 179 to 206 (SDRP…PRTA). Residues 96–114 (VPGGGGGGGGGSPGRGEGG) are compositionally biased toward gly residues. Residues 142 to 160 (LSGAELSVSSDSDSSQAGS) show a composition bias toward low complexity. The homeobox DNA-binding region spans 200 to 259 (DKRPRTAFTAEQLQRLKAEFQTNRYLTEQRRQSLAQELGLNESQIKIWFQNKRAKIKKAT).

This sequence belongs to the engrailed homeobox family.

The protein resides in the nucleus. This is Homeobox protein engrailed-2 (EN2) from Gallus gallus (Chicken).